We begin with the raw amino-acid sequence, 592 residues long: Protein kinase C zeta type (592 aa).

The 84-residue stretch at 15 to 98 (RVRLKAHYGG…EVLIIHVFPS (84 aa)) folds into the PB1 domain. The interval 79–145 (AFRLVCQGRD…KRFNRGAYCG (67 aa)) is interaction with SQSTM1. The Phorbol-ester/DAG-type zinc finger occupies 130–180 (GHLFQAKRFNRGAYCGQCSERIWGLSRQGYRCINCKLLVHKRCHVLVPLTC). Positions 252–518 (FDLIRVIGRG…FSDIKSHAFF (267 aa)) constitute a Protein kinase domain. ATP is bound by residues 258-266 (IGRGSYAKV) and K281. D376 serves as the catalytic Proton acceptor. The residue at position 410 (T410) is a Phosphothreonine; by PDPK1 and PI3K. The AGC-kinase C-terminal domain maps to 519 to 590 (RSIDWDLLEK…INPLLLSAEE (72 aa)). T560 carries the phosphothreonine modification. Phosphoserine is present on S591.

It belongs to the protein kinase superfamily. AGC Ser/Thr protein kinase family. PKC subfamily. Interacts directly with SQSTM1. Forms a ternary complex with SQSTM1 and KCNAB2. Forms another ternary complex with SQSTM1 and GABRR3. Forms a complex with SQSTM1 and MAP2K5. Interacts with PARD6A, PARD6B and PARD6G. Part of a complex with PARD3, PARD6A or PARD6B or PARD6G and CDC42 or RAC1. Interacts with ADAP1/CENTA1. Interacts (via the protein kinase domain) with WWC1. Forms a tripartite complex with WWC1 and DDR1, but predominantly in the absence of collagen. Interacts with PDPK1 (via N-terminal region). Interacts with WDFY2 (via WD repeats 1-3). Interacts with VAMP2. Forms a complex with WDFY2 and VAMP2. Interacts with APPL1. Interacts with WWC1, WWC2 and WWC3. Post-translationally, CDH5 is required for its phosphorylation at Thr-410. Phosphorylated by protein kinase PDPK1; phosphorylation is inhibited by the apoptotic C-terminal cleavage product of PKN2. Phosphorylation at Thr-410 by PI3K activates the kinase. In terms of tissue distribution, isoform 1: In brain, highly expressed in cerebellar granule neurons and cerebellar astrocytes (at protein level). Expressed at low levels in testes, lung and kidney. Isoform 2: Specifically expressed in brain where it localizes to cerebellar granule neurons (at protein level).

Its subcellular location is the cytoplasm. It localises to the endosome. The protein resides in the cell junction. It is found in the membrane. It carries out the reaction L-seryl-[protein] + ATP = O-phospho-L-seryl-[protein] + ADP + H(+). It catalyses the reaction L-threonyl-[protein] + ATP = O-phospho-L-threonyl-[protein] + ADP + H(+). Its activity is regulated as follows. Atypical PKCs (PRKCI and PRKCZ) exhibit an elevated basal enzymatic activity (that may be due to the interaction with SMG1 or SQSTM1) and are not regulated by diacylglycerol, phosphatidylserine, phorbol esters or calcium ions. Two specific sites, Thr-410 (activation loop of the kinase domain) and Thr-560 (turn motif), need to be phosphorylated for its full activation. Phosphatidylinositol 3,4,5-trisphosphate might be a physiological activator. Isoform 2: Constitutively active. In terms of biological role, calcium- and diacylglycerol-independent serine/threonine-protein kinase that functions in phosphatidylinositol 3-kinase (PI3K) pathway and mitogen-activated protein (MAP) kinase cascade, and is involved in NF-kappa-B activation, mitogenic signaling, cell proliferation, cell polarity, inflammatory response and maintenance of long-term potentiation (LTP). Upon lipopolysaccharide (LPS) treatment in macrophages, or following mitogenic stimuli, functions downstream of PI3K to activate MAP2K1/MEK1-MAPK1/ERK2 signaling cascade independently of RAF1 activation. Required for insulin-dependent activation of AKT3, but may function as an adapter rather than a direct activator. Upon insulin treatment may act as a downstream effector of PI3K and contribute to the activation of translocation of the glucose transporter SLC2A4/GLUT4 and subsequent glucose transport in adipocytes. In EGF-induced cells, binds and activates MAP2K5/MEK5-MAPK7/ERK5 independently of its kinase activity and can activate JUN promoter through MEF2C. Through binding with SQSTM1/p62, functions in interleukin-1 signaling and activation of NF-kappa-B with the specific adapters RIPK1 and TRAF6. Participates in TNF-dependent transactivation of NF-kappa-B by phosphorylating and activating IKBKB kinase, which in turn leads to the degradation of NF-kappa-B inhibitors. In migrating astrocytes, forms a cytoplasmic complex with PARD6A and is recruited by CDC42 to function in the establishment of cell polarity along with the microtubule motor and dynein. In association with FEZ1, stimulates neuronal differentiation in PC12 cells. In the inflammatory response, is required for the T-helper 2 (Th2) differentiation process, including interleukin production, efficient activation of JAK1 and the subsequent phosphorylation and nuclear translocation of STAT6. May be involved in development of allergic airway inflammation (asthma), a process dependent on Th2 immune response. In the NF-kappa-B-mediated inflammatory response, can relieve SETD6-dependent repression of NF-kappa-B target genes by phosphorylating the RELA subunit at 'Ser-311'. Phosphorylates VAMP2 in vitro. Phosphorylates and activates LRRK1, which phosphorylates RAB proteins involved in intracellular trafficking. Functionally, involved in late synaptic long term potentiation phase in CA1 hippocampal cells and long term memory maintenance. This is Protein kinase C zeta type (Prkcz) from Mus musculus (Mouse).